The primary structure comprises 439 residues: Niacin transporter NiaP (439 aa).

The next 12 membrane-spanning stretches (helical) occupy residues 20–40 (LWVVGLGWMFDALDTGIIAFI), 57–77 (WIVSIGFIGMALGAVFSGGLA), 84–104 (TVFATTLLIYSLATAACAFAP), 108–128 (WLLAFRFIVGLGLGGQLPVAV), 143–163 (FIVLLESFWGLGWLVAALVSY), 169–189 (FGWHIAFLIGGLPAIYVYVII), 253–273 (LMLWLVWFGIVFSYYGIFTWL), 288–308 (FEYVLIMILAQLPGYISAAWL), 316–336 (ATLAGFIGACAISAYFFGQAD), 338–358 (VFNIMVWGCLLSFFNLGAWGV), 374–394 (FGAGWASAVGRMGGIAAPIVV), and 407–427 (VFMMFTLVLLAVAAVIVILGE).

It belongs to the major facilitator superfamily. Sugar transporter (TC 2.A.1.1) family.

The protein localises to the cell inner membrane. Its function is as follows. Functions as a high-affinity transporter of niacin (nicotinamide or nicotinate). Probably substantially contributes to niacin transport when its concentration in the medium is very low. The protein is Niacin transporter NiaP of Acinetobacter baylyi (strain ATCC 33305 / BD413 / ADP1).